We begin with the raw amino-acid sequence, 440 residues long: Aclacinomycin-T 2-deoxy-L-fucose transferase (440 aa).

It carries out the reaction dTDP-2-deoxy-beta-L-fucose + aclacinomycin T = aclacinomycin S + dTDP + H(+). Functionally, involved in the biosynthesis of the trisaccharide moiety characteristic of the antitumor drug aclacinomycins. In the first reaction, AknK catalyzes the transfer of 2-deoxy-beta-L-fucose from the activated donor dTDP-2-deoxy-beta-L-fucose to the mono-glycosylated aclacinomycin T (rhodosaminyl aklavinone), forming the di-glycosylated aclacinomycin S (L-2-deoxyfucosyl-L-rhodosaminyl aklavinone). It can also catalyze the addition of an alternate dTDP-L-sugar, dTDP-L-daunosamine, to aclacinomycin T and the addition of 2-deoxy-beta-L-fucose to the mono-glycosylated aglycones (monoglycosylated anthracyclines) such as daunomycin (daunorubicin), adriamycin (doxorubicin) and idarubicin. In vitro, AknK also catalyzes the addition of a second L-2-deoxyfucosyl moiety from dTDP-2-deoxy-beta-L-fucose, albeit with reduced activity, to the natural disaccharide chain of aclacinomycin S to produce L-deoxyfucosyl-L-deoxyfucosyl-L-rhodosaminyl aklavinone (2-deoxy-alpha-D-fucosyl-aclacinomycin S), a variant of the natural aclacinomycin A. The polypeptide is Aclacinomycin-T 2-deoxy-L-fucose transferase (Streptomyces galilaeus).